An 848-amino-acid chain; its full sequence is Coiled-coil and C2 domain-containing protein 1B (848 aa).

The span at 1–10 (MPGPRPRKGP) shows a compositional bias: basic residues. 2 disordered regions span residues 1-21 (MPGP…ETAK) and 53-75 (ALTG…PLPM). Residues 165-193 (LQALLEERIRNYREAAASAKEAGEAAKAR) adopt a coiled-coil conformation. 4 disordered regions span residues 217-276 (EDEI…DPDP), 326-353 (VDLS…ATQG), 433-460 (DFAE…QDSV), and 476-523 (ALVD…SPSV). Positions 438–448 (PVPPGFPPIPG) are enriched in pro residues. Ser455 carries the post-translational modification Phosphoserine. Acidic residues predominate over residues 476-485 (ALVDDDEESD). Low complexity-rich tracts occupy residues 487-498 (PAQAPLAKKPAQ) and 509-522 (EPKA…LSPS). Ser583 carries the post-translational modification Phosphoserine. At Thr586 the chain carries Phosphothreonine. Residues 600–626 (LRLSQKAEEVYAQLQKMLQEQQAKCLL) adopt a coiled-coil conformation. The region spanning 666 to 805 (DPPSHHFELK…EKECEIREIM (140 aa)) is the C2 domain.

This sequence belongs to the CC2D1 family. In terms of assembly, interacts with CHMP4B.

The protein localises to the nucleus. In terms of biological role, transcription factor that binds specifically to the DRE (dual repressor element) and represses HTR1A gene transcription in neuronal cells. The chain is Coiled-coil and C2 domain-containing protein 1B (Cc2d1b) from Mus musculus (Mouse).